The following is an 85-amino-acid chain: Protein MC005 (85 aa).

In terms of assembly, interacts with host IKBKG; this interaction prevents NF-kappa-B activation.

Its subcellular location is the host cytoplasm. Functionally, plays a role in the inhibition of the host NF-kappa-B pathway by preventing ubiquitin binding-dependent regulation of host IKBKB activation by IKBKG/NEMO. This chain is Protein MC005 (MC005L), found in Molluscum contagiosum virus subtype 1 (MOCV).